We begin with the raw amino-acid sequence, 515 residues long: RNA-splicing ligase RtcB homolog (515 aa).

Mn(2+) contacts are provided by Asp-129, Cys-132, His-237, His-269, and His-363. A GMP-binding site is contributed by 236–240; that stretch reads NHYAE. GMP is bound by residues 363–364, 412–415, Ser-419, 438–441, and Lys-514; these read HN, GGTM, and HGAG. The active-site GMP-histidine intermediate is the His-438.

The protein belongs to the RtcB family. As to quaternary structure, catalytic component of the tRNA-splicing ligase complex. The cofactor is Mn(2+).

The enzyme catalyses a 3'-end 3'-phospho-ribonucleotide-RNA + a 5'-end dephospho-ribonucleoside-RNA + GTP = a ribonucleotidyl-ribonucleotide-RNA + GMP + diphosphate. It catalyses the reaction a 3'-end 2',3'-cyclophospho-ribonucleotide-RNA + a 5'-end dephospho-ribonucleoside-RNA + GTP + H2O = a ribonucleotidyl-ribonucleotide-RNA + GMP + diphosphate + H(+). Functionally, catalytic subunit of the tRNA-splicing ligase complex that acts by directly joining spliced tRNA halves to mature-sized tRNAs by incorporating the precursor-derived splice junction phosphate into the mature tRNA as a canonical 3',5'-phosphodiester. May act as an RNA ligase with broad substrate specificity, and may function toward other RNAs. The sequence is that of RNA-splicing ligase RtcB homolog from Ostreococcus tauri.